The primary structure comprises 427 residues: Citrate synthase (427 aa).

Residues His-306 and Asp-363 contribute to the active site.

This sequence belongs to the citrate synthase family. In terms of assembly, homohexamer.

It carries out the reaction oxaloacetate + acetyl-CoA + H2O = citrate + CoA + H(+). It functions in the pathway carbohydrate metabolism; tricarboxylic acid cycle; isocitrate from oxaloacetate: step 1/2. Allosterically inhibited by NADH. The sequence is that of Citrate synthase (gltA) from Salmonella typhimurium (strain LT2 / SGSC1412 / ATCC 700720).